Here is a 425-residue protein sequence, read N- to C-terminus: Tyrosine--tRNA ligase (425 aa).

Y37 is an L-tyrosine binding site. The short motif at 42–51 is the 'HIGH' region element; it reads PTADSLHLGH. Y175 and Q179 together coordinate L-tyrosine. Positions 235 to 239 match the 'KMSKS' region motif; the sequence is KFGKT. K238 serves as a coordination point for ATP. Positions 357–414 constitute an S4 RNA-binding domain; sequence ADLQQALVSAELVPSRGQARTMISSNAVTINGEKQADPEYTFSASDRLFDRYTLLRRG.

It belongs to the class-I aminoacyl-tRNA synthetase family. TyrS type 1 subfamily. In terms of assembly, homodimer.

The protein resides in the cytoplasm. The catalysed reaction is tRNA(Tyr) + L-tyrosine + ATP = L-tyrosyl-tRNA(Tyr) + AMP + diphosphate + H(+). Its function is as follows. Catalyzes the attachment of tyrosine to tRNA(Tyr) in a two-step reaction: tyrosine is first activated by ATP to form Tyr-AMP and then transferred to the acceptor end of tRNA(Tyr). This Pectobacterium carotovorum subsp. carotovorum (strain PC1) protein is Tyrosine--tRNA ligase.